The chain runs to 466 residues: Secreted RxLR effector protein 101 (466 aa).

Residues 1 to 21 (MRGAYSVITALLVVASSQIAA) form the signal peptide. Positions 48-63 (RYLRGSQHVHDSNEER) match the RxLR-dEER motif. Disordered stretches follow at residues 99–127 (KMPH…GANA) and 384–405 (RTFN…VRSS). A compositionally biased stretch (basic residues) spans 109–121 (KVSRVTRTGKKMT). Residues 385 to 395 (TFNGNTDTASL) show a composition bias toward polar residues.

It belongs to the RxLR effector family.

It is found in the secreted. It localises to the host nucleus. Functionally, secreted effector that partially suppresses the host cell death induced by cell death-inducing proteins. The sequence is that of Secreted RxLR effector protein 101 from Plasmopara viticola (Downy mildew of grapevine).